Here is a 253-residue protein sequence, read N- to C-terminus: MLTENYNKQAIAQAFGRAAGCYDRFAELQRTSGERLLALMPAHSGLQVLDAGCGTGHFSRYWRQAGRNVTALDLSAEMLAYAREQHAADRYLEGDIENLPLADSCVDICYSNLAVQWCDSLPRALGELYRITRPGGVIAFATLADGSLSELSQAWQRLDGTQRTNRFLPHSVIDAACQPYRHHLLQEREVCLFPDVLALMKSLKGIGATWLHEGRTPGLLSRARLAALSACYPQEQGGYPLSYQLVYGVIYRD.

The protein belongs to the methyltransferase superfamily.

The catalysed reaction is malonyl-[ACP] + S-adenosyl-L-methionine = malonyl-[ACP] methyl ester + S-adenosyl-L-homocysteine. The protein operates within cofactor biosynthesis; biotin biosynthesis. Functionally, converts the free carboxyl group of a malonyl-thioester to its methyl ester by transfer of a methyl group from S-adenosyl-L-methionine (SAM). It allows to synthesize pimeloyl-ACP via the fatty acid synthetic pathway. In Pectobacterium atrosepticum (strain SCRI 1043 / ATCC BAA-672) (Erwinia carotovora subsp. atroseptica), this protein is Malonyl-[acyl-carrier protein] O-methyltransferase.